A 317-amino-acid polypeptide reads, in one-letter code: Sulfate adenylyltransferase subunit 2 (317 aa).

Disordered regions lie at residues 1–21 (MPDSRPDTELSNPQSAKAPLD) and 298–317 (RAIDRDQSGSMEKKKREGYF).

This sequence belongs to the PAPS reductase family. CysD subfamily. In terms of assembly, heterodimer composed of CysD, the smaller subunit, and CysN.

It carries out the reaction sulfate + ATP + H(+) = adenosine 5'-phosphosulfate + diphosphate. The protein operates within sulfur metabolism; hydrogen sulfide biosynthesis; sulfite from sulfate: step 1/3. Functionally, with CysN forms the ATP sulfurylase (ATPS) that catalyzes the adenylation of sulfate producing adenosine 5'-phosphosulfate (APS) and diphosphate, the first enzymatic step in sulfur assimilation pathway. APS synthesis involves the formation of a high-energy phosphoric-sulfuric acid anhydride bond driven by GTP hydrolysis by CysN coupled to ATP hydrolysis by CysD. The protein is Sulfate adenylyltransferase subunit 2 of Rhizobium johnstonii (strain DSM 114642 / LMG 32736 / 3841) (Rhizobium leguminosarum bv. viciae).